We begin with the raw amino-acid sequence, 162 residues long: NADH-quinone oxidoreductase subunit I (162 aa).

4Fe-4S ferredoxin-type domains lie at 54 to 83 (RRYE…IESE) and 93 to 122 (TRYD…ETQI). The [4Fe-4S] cluster site is built by Cys63, Cys66, Cys69, Cys73, Cys102, Cys105, Cys108, and Cys112.

It belongs to the complex I 23 kDa subunit family. In terms of assembly, NDH-1 is composed of 14 different subunits. Subunits NuoA, H, J, K, L, M, N constitute the membrane sector of the complex. It depends on [4Fe-4S] cluster as a cofactor.

The protein localises to the cell inner membrane. It carries out the reaction a quinone + NADH + 5 H(+)(in) = a quinol + NAD(+) + 4 H(+)(out). In terms of biological role, NDH-1 shuttles electrons from NADH, via FMN and iron-sulfur (Fe-S) centers, to quinones in the respiratory chain. The immediate electron acceptor for the enzyme in this species is believed to be ubiquinone. Couples the redox reaction to proton translocation (for every two electrons transferred, four hydrogen ions are translocated across the cytoplasmic membrane), and thus conserves the redox energy in a proton gradient. This is NADH-quinone oxidoreductase subunit I from Burkholderia cenocepacia (strain HI2424).